A 436-amino-acid chain; its full sequence is Magnesium transporter MRS2-4 (436 aa).

A disordered region spans residues 1-56; the sequence is MGKGPLSFRRLSSIRHRKKGSAVKDDSAQTSTPSSPPPPLPIHAGGSAVGATGKAK. The span at 12-21 shows a compositional bias: basic residues; it reads SSIRHRKKGS. Residues 44–53 show a composition bias toward low complexity; the sequence is AGGSAVGATG. Helical transmembrane passes span 372-392 and 405-425; these read LTLT…SLFG and VFGY…MVTL. The Required for magnesium transport activity motif lies at 392–394; sequence GMN.

This sequence belongs to the CorA metal ion transporter (MIT) (TC 1.A.35.5) family. In terms of tissue distribution, expressed in the whole plant except roots.

The protein localises to the membrane. Its function is as follows. Magnesium transporter that may mediate the influx of magnesium. This Arabidopsis thaliana (Mouse-ear cress) protein is Magnesium transporter MRS2-4 (MRS2-4).